Here is a 154-residue protein sequence, read N- to C-terminus: Aspartate carbamoyltransferase regulatory chain (154 aa).

Zn(2+) is bound by residues Cys109, Cys114, Cys138, and Cys141.

Belongs to the PyrI family. Contains catalytic and regulatory chains. Zn(2+) serves as cofactor.

In terms of biological role, involved in allosteric regulation of aspartate carbamoyltransferase. This is Aspartate carbamoyltransferase regulatory chain from Photobacterium profundum (strain SS9).